The sequence spans 1511 residues: DNA-directed RNA polymerase subunit beta' (1511 aa).

C75, C77, C90, and C93 together coordinate Zn(2+). 3 residues coordinate Mg(2+): D474, D476, and D478. Zn(2+) contacts are provided by C804, C878, C885, and C888.

Belongs to the RNA polymerase beta' chain family. The RNAP catalytic core consists of 2 alpha, 1 beta, 1 beta' and 1 omega subunit. When a sigma factor is associated with the core the holoenzyme is formed, which can initiate transcription. Mg(2+) serves as cofactor. Zn(2+) is required as a cofactor.

The enzyme catalyses RNA(n) + a ribonucleoside 5'-triphosphate = RNA(n+1) + diphosphate. Its function is as follows. DNA-dependent RNA polymerase catalyzes the transcription of DNA into RNA using the four ribonucleoside triphosphates as substrates. The chain is DNA-directed RNA polymerase subunit beta' from Aliarcobacter butzleri (strain RM4018) (Arcobacter butzleri).